Reading from the N-terminus, the 130-residue chain is Small ribosomal subunit protein uS8 (130 aa).

It belongs to the universal ribosomal protein uS8 family. As to quaternary structure, part of the 30S ribosomal subunit.

Its function is as follows. One of the primary rRNA binding proteins, it binds directly to 16S rRNA central domain where it helps coordinate assembly of the platform of the 30S subunit. The polypeptide is Small ribosomal subunit protein uS8 (Nitrosopumilus maritimus (strain SCM1)).